The chain runs to 360 residues: MNKLALYCRAGFEKELAGEITDKAAQLGVFGFVNLTEQSGYVIFECYQANEADHLAREIKFEQLIFARQMIVVGELLEDLPTADRISPIIAQYKTLQPKHSSALFVETPDTNEAKALLTFCRKFTVPLRNSLKQEGWLTSSDNVKDSISLHILFIRPGCCYVGYAYNHNKSPFFMGIPRLKFPSDAPSRSTLKLEEAILTFIPINQEKKRFNEQMKGVDLGACPGGWTYQLVKRGLFVYAVDHGKIAATLHETGRIEHCVEDGFKFQPPKLKQMDWLVCDMVERPMRISQLIGKWLMNGWCRETIFNLKLPMKKRYHEVQLCLSLFRQLTKQGLCFKLQAKHLYHDREEITVHIVIMGKK.

S-adenosyl-L-methionine contacts are provided by residues serine 190, 223–226, aspartate 242, aspartate 262, and aspartate 280; that span reads CPGG. Lysine 309 (proton acceptor) is an active-site residue.

The protein belongs to the class I-like SAM-binding methyltransferase superfamily. RNA methyltransferase RlmE family. RlmM subfamily. As to quaternary structure, monomer.

It is found in the cytoplasm. The catalysed reaction is cytidine(2498) in 23S rRNA + S-adenosyl-L-methionine = 2'-O-methylcytidine(2498) in 23S rRNA + S-adenosyl-L-homocysteine + H(+). Catalyzes the 2'-O-methylation at nucleotide C2498 in 23S rRNA. The chain is Ribosomal RNA large subunit methyltransferase M from Haemophilus ducreyi (strain 35000HP / ATCC 700724).